The sequence spans 234 residues: Large ribosomal subunit protein uL1 (234 aa).

It belongs to the universal ribosomal protein uL1 family. In terms of assembly, part of the 50S ribosomal subunit.

Binds directly to 23S rRNA. The L1 stalk is quite mobile in the ribosome, and is involved in E site tRNA release. In terms of biological role, protein L1 is also a translational repressor protein, it controls the translation of the L11 operon by binding to its mRNA. In Wolinella succinogenes (strain ATCC 29543 / DSM 1740 / CCUG 13145 / JCM 31913 / LMG 7466 / NCTC 11488 / FDC 602W) (Vibrio succinogenes), this protein is Large ribosomal subunit protein uL1.